A 67-amino-acid polypeptide reads, in one-letter code: Large ribosomal subunit protein bL31 (67 aa).

The protein belongs to the bacterial ribosomal protein bL31 family. Type A subfamily. In terms of assembly, part of the 50S ribosomal subunit.

In terms of biological role, binds the 23S rRNA. The protein is Large ribosomal subunit protein bL31 of Helicobacter acinonychis (strain Sheeba).